The following is a 24-amino-acid chain: Tryptophanase operon leader peptide (24 aa).

This is Tryptophanase operon leader peptide (tnaL) from Escherichia coli O157:H7.